Consider the following 82-residue polypeptide: Small ribosomal subunit protein uS17 (82 aa).

Belongs to the universal ribosomal protein uS17 family. In terms of assembly, part of the 30S ribosomal subunit.

Functionally, one of the primary rRNA binding proteins, it binds specifically to the 5'-end of 16S ribosomal RNA. The sequence is that of Small ribosomal subunit protein uS17 from Paracoccus denitrificans (strain Pd 1222).